A 553-amino-acid polypeptide reads, in one-letter code: Major facilitator-type transporter hxnZ (553 aa).

The next 5 helical transmembrane spans lie at 89 to 109 (FTVAGFGWIVDNFCSQGISAV), 128 to 148 (VAYYVGMIIGASFWGISSDLI), 152 to 172 (PAFNSTLAIAGIFLCAAAGTS), 174 to 194 (FIAFSALWAVIGTAAGGNVVC), and 213 to 233 (ALSGWWNLGQLVVSLLAWVFL). N235 is a glycosylation site (N-linked (GlcNAc...) asparagine). 7 helical membrane-spanning segments follow: residues 257–277 (YTLITLGGLSLAFTFVRIFVF), 366–386 (ALIWAVWLIIGIAYPLYFNFL), 409–429 (IQSAVGVVGPLSAAVLVNTFL), 433–453 (WMMGISSIVTGVFLFAYVGVK), 459–481 (LAFSCVTGLLANFANQLSEYAIM), 496–516 (TASGTAASLLRFGGLVASLIA), and 525–545 (PIYASAALWVGVGVLCFGLPF).

It belongs to the major facilitator superfamily.

It localises to the cell membrane. Functionally, major facilitator-type transporter, part of the hnx cluster involved in the purine degradation. The nicotinate hydroxylase hnxS accepts nicotinate as a substrate and catalyzes the first step of nicotinate catabolism. The major facilitator-type transporters hxnP and hxnZ are probably involved in the uptake of nicotinate-derived metabolites, and the oxidoreductases hxnT and hxnY in the further metabolism of 6-OH nicotinic acid. This is Major facilitator-type transporter hxnZ from Emericella nidulans (strain FGSC A4 / ATCC 38163 / CBS 112.46 / NRRL 194 / M139) (Aspergillus nidulans).